The chain runs to 104 residues: Iron-sulfur cluster assembly protein CyaY (104 aa).

Belongs to the frataxin family.

Involved in iron-sulfur (Fe-S) cluster assembly. May act as a regulator of Fe-S biogenesis. In Aeromonas salmonicida (strain A449), this protein is Iron-sulfur cluster assembly protein CyaY.